A 413-amino-acid polypeptide reads, in one-letter code: NPL4-like protein 2 (413 aa).

At S104 the chain carries Phosphoserine. An MPN domain is found at 131 to 272; sequence SVSFDRDAAN…ADVHFEAFQM (142 aa).

It belongs to the NPL4 family.

Its pathway is protein degradation; proteasomal ubiquitin-dependent pathway. In terms of biological role, may be part of a complex that binds ubiquitinated proteins and that is necessary for the export of misfolded proteins from the ER to the cytoplasm, where they are degraded by the proteasome. This chain is NPL4-like protein 2, found in Arabidopsis thaliana (Mouse-ear cress).